The primary structure comprises 540 residues: MLO protein homolog 1 (540 aa).

At 1–16 the chain is on the extracellular side; the sequence is MAGGRSGSRELPETPT. The helical transmembrane segment at 17 to 37 threads the bilayer; that stretch reads WAVAVVCAVLVLVSAAMEHGL. At 38-60 the chain is on the cytoplasmic side; it reads HNLSHWFRRRQKKAMGDALDKIK. Residues 61–81 form a helical membrane-spanning segment; that stretch reads AELMLLGFISLLLTVAQAPIS. The Extracellular portion of the chain corresponds to 82-142; it reads KICIPKSAAN…MSAKSMHQLH (61 aa). A helical transmembrane segment spans residues 143 to 163; the sequence is IFIFVLAVFHVTYCIITMGLG. Topologically, residues 164-265 are cytoplasmic; sequence RLKMKKWKKW…IKRSLEDDFK (102 aa). A helical transmembrane segment spans residues 266-286; it reads VVVGISLPLWFVGILVLFLDI. A topological domain (extracellular) is located at residue histidine 287. Residues 288–308 form a helical membrane-spanning segment; that stretch reads GLGTLIWISFVPLIIVLLVGT. Topologically, residues 309–347 are cytoplasmic; sequence KLEMVIMEMAQEIQDRATVIQGAPMVEPSNKYFWFNRPD. The chain crosses the membrane as a helical span at residues 348-368; it reads WVLFFIHLTLFHNAFQMAHFV. Residues 369-383 lie on the Extracellular side of the membrane; sequence WTMATPGLKKCFHEN. The helical transmembrane segment at 384 to 404 threads the bilayer; sequence IWLSIVEVIVGISLQVLCSYI. Over 405–540 the chain is Cytoplasmic; it reads TFPLYALVTQ…DSDFSFSAQR (136 aa). The tract at residues 426-447 is calmodulin-binding; sequence EQTMKALMNWRKKAMEKKKVRD. The segment at 468-526 is disordered; sequence ASPVHLLQDHRARSDDPPSPITVASPPAPEEDMYPVPAAAASRQLLDDPPDRRWMASSS. Composition is skewed to basic and acidic residues over residues 474–483 and 512–521; these read LQDHRARSDD and LLDDPPDRRW.

Belongs to the MLO family.

It localises to the membrane. In terms of biological role, may be involved in modulation of pathogen defense and leaf cell death. Activity seems to be regulated by Ca(2+)-dependent calmodulin binding and seems not to require heterotrimeric G proteins. This Oryza sativa subsp. indica (Rice) protein is MLO protein homolog 1 (MLO1).